The sequence spans 166 residues: Putative 4-hydroxy-4-methyl-2-oxoglutarate aldolase (166 aa).

Substrate is bound by residues 74-77 (GDQI) and Arg96. Asp97 contacts a divalent metal cation.

The protein belongs to the class II aldolase/RraA-like family. As to quaternary structure, homotrimer. A divalent metal cation is required as a cofactor.

It carries out the reaction 4-hydroxy-4-methyl-2-oxoglutarate = 2 pyruvate. The enzyme catalyses oxaloacetate + H(+) = pyruvate + CO2. Its function is as follows. Catalyzes the aldol cleavage of 4-hydroxy-4-methyl-2-oxoglutarate (HMG) into 2 molecules of pyruvate. Also contains a secondary oxaloacetate (OAA) decarboxylase activity due to the common pyruvate enolate transition state formed following C-C bond cleavage in the retro-aldol and decarboxylation reactions. The sequence is that of Putative 4-hydroxy-4-methyl-2-oxoglutarate aldolase from Xanthomonas axonopodis pv. citri (strain 306).